The primary structure comprises 167 residues: Small ribosomal subunit protein uS5 (167 aa).

The 64-residue stretch at Leu-12–Val-75 folds into the S5 DRBM domain.

Belongs to the universal ribosomal protein uS5 family. In terms of assembly, part of the 30S ribosomal subunit. Contacts proteins S4 and S8.

Functionally, with S4 and S12 plays an important role in translational accuracy. In terms of biological role, located at the back of the 30S subunit body where it stabilizes the conformation of the head with respect to the body. This is Small ribosomal subunit protein uS5 from Shewanella sp. (strain W3-18-1).